The primary structure comprises 434 residues: Eukaryotic peptide chain release factor subunit 1-1 (434 aa).

The protein belongs to the eukaryotic release factor 1 family. In terms of assembly, heterodimer of two subunits, one of which binds GTP.

Its subcellular location is the cytoplasm. Directs the termination of nascent peptide synthesis (translation) in response to the termination codons UAA, UAG and UGA. Modulates plant growth and development. The chain is Eukaryotic peptide chain release factor subunit 1-1 from Brassica oleracea var. botrytis (Cauliflower).